Reading from the N-terminus, the 135-residue chain is Large ribosomal subunit protein uL16c (135 aa).

The protein belongs to the universal ribosomal protein uL16 family. As to quaternary structure, part of the 50S ribosomal subunit.

The protein localises to the plastid. It localises to the chloroplast. This Euglena gracilis protein is Large ribosomal subunit protein uL16c.